Reading from the N-terminus, the 426-residue chain is Probable imidazolonepropionase (426 aa).

Residues Tyr-159 and His-192 each coordinate 4-imidazolone-5-propanoate. Tyr-159 contacts N-formimidoyl-L-glutamate. Residue His-260 coordinates Fe(3+). Residue His-260 coordinates Zn(2+). Glu-263 serves as a coordination point for 4-imidazolone-5-propanoate. Asp-334 contacts Fe(3+). Zn(2+) is bound at residue Asp-334. Asn-336 serves as a coordination point for N-formimidoyl-L-glutamate.

It belongs to the metallo-dependent hydrolases superfamily. HutI family. Zn(2+) serves as cofactor. Fe(3+) is required as a cofactor.

The enzyme catalyses 4-imidazolone-5-propanoate + H2O = N-formimidoyl-L-glutamate. Its pathway is amino-acid degradation; L-histidine degradation into L-glutamate; N-formimidoyl-L-glutamate from L-histidine: step 3/3. The chain is Probable imidazolonepropionase (AMDHD1) from Bos taurus (Bovine).